The primary structure comprises 328 residues: NADH:quinone reductase (328 aa).

FMN contacts are provided by residues 22-24 (GMQ), Thr-75, Lys-124, Ala-150, 178-180 (SGG), and 201-202 (GT).

This sequence belongs to the nitronate monooxygenase family. In terms of assembly, monomer. Requires FMN as cofactor.

It carries out the reaction a quinone + NADH + H(+) = a quinol + NAD(+). Its function is as follows. Catalyzes the NADH-dependent reduction of a broad spectrum of quinone substrates, generating the corresponding hydroquinones. Highly prefers NADH to NADPH as a reducing substrate. Also displays a small NADH oxidase activity. Does not exhibit nitronate monooxygenase activity; is inactive against propionate 3-nitronate, 3-nitropropionate, nitroethane, 1-nitropropane, 2-nitropropane, and the anionic forms ethylnitronate, propyl-1-nitronate, and propyl-2-nitronate. Has no azoreductase activity since it is not able to reduce the azo dye methyl red with NADH. May be required to maintain an appropriate [NAD(+)]/[NADH] ratio for the catabolism of fatty acids in P.aeruginosa PAO1. This Pseudomonas aeruginosa (strain ATCC 15692 / DSM 22644 / CIP 104116 / JCM 14847 / LMG 12228 / 1C / PRS 101 / PAO1) protein is NADH:quinone reductase.